The chain runs to 280 residues: MKKVVCIVGPTGSGKTALSVKLAKSLGAEIINGDSVSIYKKLDIGSAKITTDEMDGVKHHLISHVALDEPYTVYNFQQDVRTLIDQIDKPFIVGGSGLYVKSALYNYEFEQQDNVEFPNINEMIEVIRKADPDIEIDLNNPRRIESAYRTIISGQKRSNKTKKNEPLYDIYLIYLDMDRKILKKRLETRLDLMIEKGFIEETKALINYDLNIIGYREIKDYLNGMNDLDTAKEKIITATMRFAKRQKTWFINQMKPKVYNALSPDLLDECLKDIKEFIGV.

An ATP-binding site is contributed by 9-16 (GPTGSGKT). A substrate-binding site is contributed by 11-16 (TGSGKT). An interaction with substrate tRNA region spans residues 34–37 (DSVS).

The protein belongs to the IPP transferase family. Monomer. Mg(2+) is required as a cofactor.

It catalyses the reaction adenosine(37) in tRNA + dimethylallyl diphosphate = N(6)-dimethylallyladenosine(37) in tRNA + diphosphate. Catalyzes the transfer of a dimethylallyl group onto the adenine at position 37 in tRNAs that read codons beginning with uridine, leading to the formation of N6-(dimethylallyl)adenosine (i(6)A). The polypeptide is tRNA dimethylallyltransferase (Acholeplasma laidlawii (strain PG-8A)).